A 221-amino-acid polypeptide reads, in one-letter code: Cytidylate kinase 1 (221 aa).

7-15 provides a ligand contact to ATP; the sequence is GPSASGKSS.

The protein belongs to the cytidylate kinase family. Type 1 subfamily.

It is found in the cytoplasm. It catalyses the reaction CMP + ATP = CDP + ADP. The enzyme catalyses dCMP + ATP = dCDP + ADP. This chain is Cytidylate kinase 1, found in Borreliella afzelii (strain PKo) (Borrelia afzelii).